The following is a 304-amino-acid chain: tRNA pseudouridine synthase B (304 aa).

The Nucleophile role is filled by Asp38.

It belongs to the pseudouridine synthase TruB family. Type 1 subfamily.

It carries out the reaction uridine(55) in tRNA = pseudouridine(55) in tRNA. Its function is as follows. Responsible for synthesis of pseudouridine from uracil-55 in the psi GC loop of transfer RNAs. The polypeptide is tRNA pseudouridine synthase B (Listeria monocytogenes serotype 4b (strain F2365)).